The following is a 788-amino-acid chain: E3 ubiquitin-protein ligase SspH2 (788 aa).

Residues M1 to F481 are interaction with host membrane and with target proteins. LRR repeat units follow at residues H223–P242, E243–L264, L265–S282, G283–P302, G303–L324, C325–S342, G343–L364, Y365–S382, G383–L404, K405–S422, G423–S445, and S446–R466. The segment at D482 to E491 is linker. Residues T492–N788 form an E3 ubiquitin-protein ligase catalytic domain region. Positions A494–N788 constitute an NEL domain. The active-site Glycyl thioester intermediate is C580.

Belongs to the LRR-containing bacterial E3 ligase family. Post-translationally, ubiquitinated in the presence of host E1 ubiquitin-activating enzyme UBA1, E2 ubiquitin-conjugating enzyme UBE2D2 and ubiquitin.

It localises to the secreted. The protein resides in the host cytoplasm. The protein localises to the host apical cell membrane. The enzyme catalyses S-ubiquitinyl-[E2 ubiquitin-conjugating enzyme]-L-cysteine + [acceptor protein]-L-lysine = [E2 ubiquitin-conjugating enzyme]-L-cysteine + N(6)-ubiquitinyl-[acceptor protein]-L-lysine.. Exists in an autoinhibited state in the absence of substrate protein, due to interactions of the leucine-rich repeat domain with the catalytic domain. Is activated upon binding to a substrate protein. Functionally, effector proteins function to alter host cell physiology and promote bacterial survival in host tissues. This protein is an E3 ubiquitin ligase that interferes with host's ubiquitination pathway. The chain is E3 ubiquitin-protein ligase SspH2 (sspH2) from Salmonella typhimurium (strain LT2 / SGSC1412 / ATCC 700720).